The primary structure comprises 250 residues: 26S proteasome non-ATPase regulatory subunit 8 (250 aa).

Residues 63 to 233 form the PCI domain; the sequence is HDFETFDDYI…QEKPVNLDTV (171 aa).

It belongs to the proteasome subunit S14 family.

Acts as a regulatory subunit of the 26S proteasome which is involved in the ATP-dependent degradation of ubiquitinated proteins. The polypeptide is 26S proteasome non-ATPase regulatory subunit 8 (Caenorhabditis elegans).